The following is a 440-amino-acid chain: Tol-Pal system protein TolB (440 aa).

Residues 1–28 (MVMTRRIFFSWFIVICSLWLSSFSSVHA) form the signal peptide. The disordered stretch occupies residues 417–440 (RNERQLPTPNDASDPAWSPLLNMQ).

It belongs to the TolB family. In terms of assembly, the Tol-Pal system is composed of five core proteins: the inner membrane proteins TolA, TolQ and TolR, the periplasmic protein TolB and the outer membrane protein Pal. They form a network linking the inner and outer membranes and the peptidoglycan layer.

It is found in the periplasm. Its function is as follows. Part of the Tol-Pal system, which plays a role in outer membrane invagination during cell division and is important for maintaining outer membrane integrity. The chain is Tol-Pal system protein TolB from Bartonella quintana (strain Toulouse) (Rochalimaea quintana).